Consider the following 128-residue polypeptide: Large ribosomal subunit protein bL17 (128 aa).

Belongs to the bacterial ribosomal protein bL17 family. As to quaternary structure, part of the 50S ribosomal subunit. Contacts protein L32.

In Streptococcus thermophilus (strain ATCC BAA-250 / LMG 18311), this protein is Large ribosomal subunit protein bL17.